We begin with the raw amino-acid sequence, 195 residues long: Probable chemoreceptor glutamine deamidase CheD 2 (195 aa).

Belongs to the CheD family.

It catalyses the reaction L-glutaminyl-[protein] + H2O = L-glutamyl-[protein] + NH4(+). Functionally, probably deamidates glutamine residues to glutamate on methyl-accepting chemotaxis receptors (MCPs), playing an important role in chemotaxis. The protein is Probable chemoreceptor glutamine deamidase CheD 2 of Burkholderia thailandensis (strain ATCC 700388 / DSM 13276 / CCUG 48851 / CIP 106301 / E264).